Consider the following 158-residue polypeptide: UPF0145 protein Psyc_1853 (158 aa).

Residues 113 to 122 (IYQSSNQPPS) are compositionally biased toward polar residues. Residues 113 to 158 (IYQSSNQPPSHHSGHSQYEEPVPSAAQPSTTAQANDDLPRFNPFGE) form a disordered region.

This sequence belongs to the UPF0145 family.

This Psychrobacter arcticus (strain DSM 17307 / VKM B-2377 / 273-4) protein is UPF0145 protein Psyc_1853.